The primary structure comprises 182 residues: Orotate phosphoribosyltransferase (182 aa).

5-phospho-alpha-D-ribose 1-diphosphate is bound by residues arginine 91, lysine 92, lysine 95, histidine 97, and 117–125 (EDVTTTGGS). Residues threonine 121 and arginine 149 each coordinate orotate.

Belongs to the purine/pyrimidine phosphoribosyltransferase family. PyrE subfamily. As to quaternary structure, homodimer. The cofactor is Mg(2+).

It carries out the reaction orotidine 5'-phosphate + diphosphate = orotate + 5-phospho-alpha-D-ribose 1-diphosphate. It participates in pyrimidine metabolism; UMP biosynthesis via de novo pathway; UMP from orotate: step 1/2. In terms of biological role, catalyzes the transfer of a ribosyl phosphate group from 5-phosphoribose 1-diphosphate to orotate, leading to the formation of orotidine monophosphate (OMP). The protein is Orotate phosphoribosyltransferase of Pyrococcus furiosus (strain ATCC 43587 / DSM 3638 / JCM 8422 / Vc1).